The primary structure comprises 160 residues: Transcription elongation factor GreA (160 aa).

The stretch at 1 to 72 (MAEKTYPMTL…QISSLETKIR (72 aa)) forms a coiled coil.

It belongs to the GreA/GreB family.

Its function is as follows. Necessary for efficient RNA polymerase transcription elongation past template-encoded arresting sites. The arresting sites in DNA have the property of trapping a certain fraction of elongating RNA polymerases that pass through, resulting in locked ternary complexes. Cleavage of the nascent transcript by cleavage factors such as GreA or GreB allows the resumption of elongation from the new 3'terminus. GreA releases sequences of 2 to 3 nucleotides. The protein is Transcription elongation factor GreA of Streptococcus sanguinis (strain SK36).